Reading from the N-terminus, the 269-residue chain is Protein tsct-1 (269 aa).

This sequence belongs to the TSC-22/Dip/Bun family.

This Caenorhabditis elegans protein is Protein tsct-1.